A 388-amino-acid chain; its full sequence is Chorismate synthase (388 aa).

NADP(+) is bound by residues Arg39 and Arg45. Residues 130–132 (RSS), 251–252 (NA), Gly296, 311–315 (KPIPT), and Arg337 contribute to the FMN site.

It belongs to the chorismate synthase family. Homotetramer. The cofactor is FMNH2.

It carries out the reaction 5-O-(1-carboxyvinyl)-3-phosphoshikimate = chorismate + phosphate. It functions in the pathway metabolic intermediate biosynthesis; chorismate biosynthesis; chorismate from D-erythrose 4-phosphate and phosphoenolpyruvate: step 7/7. Its function is as follows. Catalyzes the anti-1,4-elimination of the C-3 phosphate and the C-6 proR hydrogen from 5-enolpyruvylshikimate-3-phosphate (EPSP) to yield chorismate, which is the branch point compound that serves as the starting substrate for the three terminal pathways of aromatic amino acid biosynthesis. This reaction introduces a second double bond into the aromatic ring system. The sequence is that of Chorismate synthase from Streptococcus pneumoniae serotype 2 (strain D39 / NCTC 7466).